The chain runs to 308 residues: Aspartate carbamoyltransferase catalytic subunit (308 aa).

Carbamoyl phosphate contacts are provided by Arg-55 and Thr-56. Lys-83 contributes to the L-aspartate binding site. Positions 105, 133, and 136 each coordinate carbamoyl phosphate. Residues Arg-166 and Arg-223 each coordinate L-aspartate. Residues Gly-264 and Pro-265 each contribute to the carbamoyl phosphate site.

Belongs to the aspartate/ornithine carbamoyltransferase superfamily. ATCase family. As to quaternary structure, heterododecamer (2C3:3R2) of six catalytic PyrB chains organized as two trimers (C3), and six regulatory PyrI chains organized as three dimers (R2).

The catalysed reaction is carbamoyl phosphate + L-aspartate = N-carbamoyl-L-aspartate + phosphate + H(+). The protein operates within pyrimidine metabolism; UMP biosynthesis via de novo pathway; (S)-dihydroorotate from bicarbonate: step 2/3. In terms of biological role, catalyzes the condensation of carbamoyl phosphate and aspartate to form carbamoyl aspartate and inorganic phosphate, the committed step in the de novo pyrimidine nucleotide biosynthesis pathway. This Salinispora tropica (strain ATCC BAA-916 / DSM 44818 / JCM 13857 / NBRC 105044 / CNB-440) protein is Aspartate carbamoyltransferase catalytic subunit.